Here is a 103-residue protein sequence, read N- to C-terminus: Protein S100-A16 (103 aa).

The region spanning 12–47 (VVVLVENFYKYVSKHSLVKNKISKSSFRKMLQKELN) is the EF-hand 1; degenerate domain. Residues 54–89 (GNRKAADKLIQNLDANHDGRISFDEYWTLIGGITSP) enclose the EF-hand 2 domain. Residues D67, N69, D71, R73, and E78 each coordinate Ca(2+).

It belongs to the S-100 family. Homodimer. Interacts with TP53.

The protein resides in the nucleus. It localises to the nucleolus. The protein localises to the cytoplasm. Calcium-binding protein. Binds one calcium ion per monomer. Can promote differentiation of adipocytes (in vitro). Overexpression in preadipocytes increases their proliferation, enhances adipogenesis and reduces insulin-stimulated glucose uptake. The protein is Protein S100-A16 (S100A16) of Bos taurus (Bovine).